Reading from the N-terminus, the 167-residue chain is Peptide deformylase (167 aa).

Positions 91 and 133 each coordinate Fe cation. E134 is an active-site residue. A Fe cation-binding site is contributed by H137.

Belongs to the polypeptide deformylase family. Requires Fe(2+) as cofactor.

The enzyme catalyses N-terminal N-formyl-L-methionyl-[peptide] + H2O = N-terminal L-methionyl-[peptide] + formate. Functionally, removes the formyl group from the N-terminal Met of newly synthesized proteins. Requires at least a dipeptide for an efficient rate of reaction. N-terminal L-methionine is a prerequisite for activity but the enzyme has broad specificity at other positions. The sequence is that of Peptide deformylase from Neisseria gonorrhoeae (strain ATCC 700825 / FA 1090).